Reading from the N-terminus, the 107-residue chain is Multidrug resistance protein mmr (107 aa).

A run of 4 helical transmembrane segments spans residues 2 to 19 (IYLY…ATSL), 29 to 51 (LWPT…LSIS), 58 to 80 (VAYA…LFLG), and 84 to 106 (SVMK…LAGA).

It belongs to the drug/metabolite transporter (DMT) superfamily. Small multidrug resistance (SMR) (TC 2.A.7.1) family. Mmr subfamily.

It is found in the cell membrane. Its function is as follows. Multidrug efflux pump. Confers resistance to tetraphenylphosphonium (TPP), erythromycin, ethidium bromide, acriflavine, safranin O and pyronin Y. This chain is Multidrug resistance protein mmr (mmr), found in Mycobacterium bovis (strain ATCC BAA-935 / AF2122/97).